Here is a 148-residue protein sequence, read N- to C-terminus: Large ribosomal subunit protein cL37 (148 aa).

Residues 1–65 constitute a chloroplast transit peptide; sequence MALLCFNSLP…SSHGRIVVKA (65 aa). Ala66 bears the N-acetylalanine mark. The segment at 125–148 is disordered; that stretch reads LVRKRKMRKKGRWPPSKMKKNKNV.

The protein belongs to the chloroplast-specific ribosomal protein cL37 family. In terms of assembly, part of the 50S ribosomal subunit.

It localises to the plastid. It is found in the chloroplast. This chain is Large ribosomal subunit protein cL37 (PSRP5), found in Arabidopsis thaliana (Mouse-ear cress).